The primary structure comprises 262 residues: Leucine-rich repeat-containing protein 18 (262 aa).

LRR repeat units follow at residues 28-49 (GRKR…ILRL), 51-72 (DIDE…IAKF), 74-95 (NLRW…IGQM), 97-118 (SLLF…VELN), 122-144 (NIRT…GALK), 145-167 (ELHE…AKLP), and 168-189 (KLKK…EMFV).

As to expression, exclusively expressed in spermatocytes and roud spermatids within seminiferous tubules during spermatogenesis.

Its subcellular location is the cytoplasm. May be involved in the regulation of spermatogenesis and sperm maturation. This is Leucine-rich repeat-containing protein 18 (Lrrc18) from Mus musculus (Mouse).